The sequence spans 442 residues: Putative ammonium transporter sll1017 (442 aa).

Transmembrane regions (helical) follow at residues 5–25 (NFPL…VGVA), 44–64 (LFLL…AMLE), 81–101 (TFDV…LMYG), 104–124 (PVLG…LDNV), 133–153 (WLFQ…AVMG), 155–175 (MYFK…YPIS), 193–213 (FAGS…AVVV), 240–260 (GVFI…LAFV), 269–289 (MLIA…ALAF), 299–319 (PNLL…TAGC), 325–345 (WSAI…TKLL), 354–374 (VGAW…VGIF), and 386–406 (IVGS…LFYV).

It belongs to the ammonia transporter channel (TC 1.A.11.2) family.

The protein resides in the cell membrane. The chain is Putative ammonium transporter sll1017 from Synechocystis sp. (strain ATCC 27184 / PCC 6803 / Kazusa).